A 358-amino-acid chain; its full sequence is Alpha-2-HS-glycoprotein (358 aa).

An N-terminal signal peptide occupies residues 1-18 (MKFFVLFLCLVQLWGCHS). One can recognise a Cystatin fetuin-A-type 1 domain in the interval 27–133 (ERNPACDDPE…QFSVVFAKCE (107 aa)). 6 disulfide bridges follow: Cys-32–Cys-349, Cys-89–Cys-100, Cys-114–Cys-132, Cys-146–Cys-149, Cys-208–Cys-218, and Cys-229–Cys-246. Asn-99 is a glycosylation site (N-linked (GlcNAc...) asparagine). Residue Ser-134 is modified to Phosphoserine. At Thr-135 the chain carries Phosphothreonine. At Ser-138 the chain carries Phosphoserine. In terms of domain architecture, Cystatin fetuin-A-type 2 spans 144-254 (KVCPQCPLLT…TCTVFPTQPV (111 aa)). N-linked (GlcNAc...) asparagine glycans are attached at residues Asn-156 and Asn-176. Positions 257-288 (LPQPDAASSANPPPAADPAVSPPSSPSVPVDS) are disordered. The span at 267–282 (NPPPAADPAVSPPSSP) shows a compositional bias: pro residues. Ser-318 and Ser-320 each carry phosphoserine. Residues 320–350 (SGEAFGPRQKPKVTHPGVASGVGPVPPPPCP) are disordered.

The protein belongs to the fetuin family. Post-translationally, phosphorylated by FAM20C in the extracellular medium. Bone marrow.

The protein localises to the secreted. This Cavia porcellus (Guinea pig) protein is Alpha-2-HS-glycoprotein (AHSG).